A 295-amino-acid polypeptide reads, in one-letter code: Protoheme IX farnesyltransferase (295 aa).

The next 9 membrane-spanning stretches (helical) occupy residues 9 to 29 (ITKPGIIFGNVLSVAGGFFLA), 36 to 56 (FGVFLAAVIGTSLVVASGCVF), 80 to 100 (LVSLKLALLYATLLGIAGVGL), 108 to 128 (LAALFAVIGFVIYVGLYSLYL), 135 to 155 (GTLVGSLSGAMPPVIGYCAVS), 163 to 183 (LTLLVMFSLWQMPHSYAIAIF), 209 to 229 (IMLYILAFLVATLMLTVGGYA), 230 to 250 (GLNYLAVAAGMGMYWLYMAWK), and 265 to 285 (FVFSIFTITALSVMMSVDFQV).

This sequence belongs to the UbiA prenyltransferase family. Protoheme IX farnesyltransferase subfamily.

The protein localises to the cell inner membrane. The enzyme catalyses heme b + (2E,6E)-farnesyl diphosphate + H2O = Fe(II)-heme o + diphosphate. The protein operates within porphyrin-containing compound metabolism; heme O biosynthesis; heme O from protoheme: step 1/1. Converts heme B (protoheme IX) to heme O by substitution of the vinyl group on carbon 2 of heme B porphyrin ring with a hydroxyethyl farnesyl side group. The chain is Protoheme IX farnesyltransferase from Pseudomonas syringae pv. syringae (strain B728a).